The following is a 156-amino-acid chain: 6,7-dimethyl-8-ribityllumazine synthase (156 aa).

Residues phenylalanine 22, 56-58 (AFE), and 80-82 (AVV) each bind 5-amino-6-(D-ribitylamino)uracil. 85–86 (ET) lines the (2S)-2-hydroxy-3-oxobutyl phosphate pocket. Histidine 88 (proton donor) is an active-site residue. A 5-amino-6-(D-ribitylamino)uracil-binding site is contributed by phenylalanine 113. Arginine 127 serves as a coordination point for (2S)-2-hydroxy-3-oxobutyl phosphate.

This sequence belongs to the DMRL synthase family.

It carries out the reaction (2S)-2-hydroxy-3-oxobutyl phosphate + 5-amino-6-(D-ribitylamino)uracil = 6,7-dimethyl-8-(1-D-ribityl)lumazine + phosphate + 2 H2O + H(+). It participates in cofactor biosynthesis; riboflavin biosynthesis; riboflavin from 2-hydroxy-3-oxobutyl phosphate and 5-amino-6-(D-ribitylamino)uracil: step 1/2. Its function is as follows. Catalyzes the formation of 6,7-dimethyl-8-ribityllumazine by condensation of 5-amino-6-(D-ribitylamino)uracil with 3,4-dihydroxy-2-butanone 4-phosphate. This is the penultimate step in the biosynthesis of riboflavin. The polypeptide is 6,7-dimethyl-8-ribityllumazine synthase (Pediococcus pentosaceus (strain ATCC 25745 / CCUG 21536 / LMG 10740 / 183-1w)).